Reading from the N-terminus, the 536-residue chain is Cytochrome P450 monooxygenase pbrC (536 aa).

A helical transmembrane segment spans residues 20–39 (VMLPALVGFAFLIYQAFFAI). A heme-binding site is contributed by Cys479.

It belongs to the cytochrome P450 family. It depends on heme as a cofactor.

The protein localises to the membrane. Its pathway is secondary metabolite biosynthesis; terpenoid biosynthesis. Its function is as follows. Cytochrome P450 monooxygenase; part of the gene cluster that mediates the biosynthesis of the sesquiterpenoid aspterric acid (AA), an inhibitor of dihydroxy-acid dehydratase (DHAD) effective as an herbicide. PbrC catalyzes the third and last step within the pathway and converts the alpha-epoxy carboxylate intermediate produced by the cytochrome P450 monooxygenase pbrB from (-)daucane into the tricyclic aspterric acid. The sequence is that of Cytochrome P450 monooxygenase pbrC from Penicillium brasilianum.